A 250-amino-acid polypeptide reads, in one-letter code: 5'/3'-nucleotidase SurE (250 aa).

Residues Asp9, Asp10, Ser40, and Asn93 each coordinate a divalent metal cation.

This sequence belongs to the SurE nucleotidase family. A divalent metal cation is required as a cofactor.

The protein resides in the cytoplasm. The enzyme catalyses a ribonucleoside 5'-phosphate + H2O = a ribonucleoside + phosphate. It catalyses the reaction a ribonucleoside 3'-phosphate + H2O = a ribonucleoside + phosphate. The catalysed reaction is [phosphate](n) + H2O = [phosphate](n-1) + phosphate + H(+). Its function is as follows. Nucleotidase with a broad substrate specificity as it can dephosphorylate various ribo- and deoxyribonucleoside 5'-monophosphates and ribonucleoside 3'-monophosphates with highest affinity to 3'-AMP. Also hydrolyzes polyphosphate (exopolyphosphatase activity) with the preference for short-chain-length substrates (P20-25). Might be involved in the regulation of dNTP and NTP pools, and in the turnover of 3'-mononucleotides produced by numerous intracellular RNases (T1, T2, and F) during the degradation of various RNAs. The polypeptide is 5'/3'-nucleotidase SurE (Yersinia enterocolitica serotype O:8 / biotype 1B (strain NCTC 13174 / 8081)).